The following is a 1298-amino-acid chain: DNA repair protein rad-50 (1298 aa).

R13, N38, G39, G41, K42, T43, T44, I66, and Q158 together coordinate ATP. Residue T43 participates in Mg(2+) binding. Q158 is a binding site for Mg(2+). 3 coiled-coil regions span residues 222 to 291 (ARQN…IRVE), 317 to 598 (EERA…QYRK), and 622 to 660 (AEEV…IEES). The 98-residue stretch at 622–719 (AEEVSEKLEN…EEIIIVKAEG (98 aa)) folds into the Zinc-hook domain. Residues C666 and C669 each contribute to the Zn(2+) site. Coiled-coil stretches lie at residues 691–719 (LSFP…KAEG) and 754–1092 (KNEK…KESI).

This sequence belongs to the SMC family. RAD50 subfamily. As to quaternary structure, component of the MRN complex composed of two heterodimers rad-50 and mre-11 associated with a single nbs-1. Zn(2+) serves as cofactor.

It is found in the nucleus. The protein resides in the chromosome. It carries out the reaction ATP + H2O = ADP + phosphate + H(+). Component of the MRN complex, which plays a central role in double-strand break (DSB) repair, DNA recombination, maintenance of telomere integrity and meiosis. The MRN complex is involved in the repair of DNA double-strand breaks (DSBs) via homologous recombination (HR), an error-free mechanism which primarily occurs during S and G2 phases. The complex (1) mediates the end resection of damaged DNA, which generates proper single-stranded DNA, a key initial steps in HR, and is (2) required for the recruitment of other repair factors and efficient activation of ATM and ATR upon DNA damage. The MRN complex possesses single-strand endonuclease activity and double-strand-specific 3'-5' exonuclease activity, which are provided by mre-11, to initiate end resection, which is required for single-strand invasion and recombination. Within the complex, rad-50 is both required to bind DNA ends and hold them in close proximity and regulate the activity of mre-11. Rad-50 provides an ATP-dependent control of mre-11 by positioning DNA ends into the mre-11 active site: ATP-binding induces a large structural change from an open form with accessible mre-11 nuclease sites into a closed form. In Caenorhabditis elegans, this protein is DNA repair protein rad-50 (rad-50).